A 439-amino-acid chain; its full sequence is uncharacterized protein (439 aa).

The VWFA domain maps to Pro273–Ser439.

This is an uncharacterized protein from Methanocaldococcus jannaschii (strain ATCC 43067 / DSM 2661 / JAL-1 / JCM 10045 / NBRC 100440) (Methanococcus jannaschii).